We begin with the raw amino-acid sequence, 210 residues long: MAKDPQTPTDEELARAERDAEPQPGDATDDEVELEGVVEDVEASEADAEALENPEADALAARVEELEQALADAKDQTARAAAEAQNVRRRAEQDVEKARKFALEKFVKELLPVVDSLEKALESMQEGASEVHREGVSMTLKLQLDVLAKFGVEAVDPQGEPFDPQVHEAMTMVPNPEVEPNTVIEVMQKGYLLNGRLVRPAMVVVSQAAN.

The disordered stretch occupies residues 1-31 (MAKDPQTPTDEELARAERDAEPQPGDATDDE). Residues 12–21 (ELARAERDAE) are compositionally biased toward basic and acidic residues.

It belongs to the GrpE family. As to quaternary structure, homodimer.

Its subcellular location is the cytoplasm. Functionally, participates actively in the response to hyperosmotic and heat shock by preventing the aggregation of stress-denatured proteins, in association with DnaK and GrpE. It is the nucleotide exchange factor for DnaK and may function as a thermosensor. Unfolded proteins bind initially to DnaJ; upon interaction with the DnaJ-bound protein, DnaK hydrolyzes its bound ATP, resulting in the formation of a stable complex. GrpE releases ADP from DnaK; ATP binding to DnaK triggers the release of the substrate protein, thus completing the reaction cycle. Several rounds of ATP-dependent interactions between DnaJ, DnaK and GrpE are required for fully efficient folding. This chain is Protein GrpE, found in Chromohalobacter salexigens (strain ATCC BAA-138 / DSM 3043 / CIP 106854 / NCIMB 13768 / 1H11).